The sequence spans 225 residues: UPF0173 metal-dependent hydrolase PH1671 (225 aa).

Belongs to the UPF0173 family.

The polypeptide is UPF0173 metal-dependent hydrolase PH1671 (Pyrococcus horikoshii (strain ATCC 700860 / DSM 12428 / JCM 9974 / NBRC 100139 / OT-3)).